The primary structure comprises 350 residues: ATP-dependent (S)-NAD(P)H-hydrate dehydratase (350 aa).

A YjeF C-terminal domain is found at 35 to 342 (LMQSVKRIIP…PEVGRAYEEL (308 aa)). (6S)-NADPHX-binding positions include glycine 139 and 192–198 (NVAEFGR). ATP is bound by residues 230–234 (KGPVD) and 249–258 (GGLKRCGGQG). Position 259 (aspartate 259) interacts with (6S)-NADPHX.

It belongs to the NnrD/CARKD family. Mg(2+) serves as cofactor.

The protein localises to the cytoplasm. The enzyme catalyses (6S)-NADHX + ATP = ADP + phosphate + NADH + H(+). The catalysed reaction is (6S)-NADPHX + ATP = ADP + phosphate + NADPH + H(+). In terms of biological role, catalyzes the dehydration of the S-form of NAD(P)HX at the expense of ATP, which is converted to ADP. Together with NAD(P)HX epimerase, which catalyzes the epimerization of the S- and R-forms, the enzyme allows the repair of both epimers of NAD(P)HX, a damaged form of NAD(P)H that is a result of enzymatic or heat-dependent hydration. The sequence is that of ATP-dependent (S)-NAD(P)H-hydrate dehydratase from Mycosarcoma maydis (Corn smut fungus).